The chain runs to 96 residues: uncharacterized protein (96 aa).

Over residues 1–18 (MSNVDRYDVHRDGIEKDR) the composition is skewed to basic and acidic residues. The interval 1-96 (MSNVDRYDVH…REQHHQPQKQ (96 aa)) is disordered. A compositionally biased stretch (polar residues) spans 28-46 (QNGQSQSTMDNRPPWNNDT). Over residues 70 to 96 (TIDRQQEELTKNWTESLREQHHQPQKQ) the composition is skewed to basic and acidic residues.

This is an uncharacterized protein from Caenorhabditis elegans.